We begin with the raw amino-acid sequence, 478 residues long: tRNA(Ile)-lysidine synthase (478 aa).

ATP is bound at residue 27–32 (SGGSDS).

The protein belongs to the tRNA(Ile)-lysidine synthase family.

The protein resides in the cytoplasm. The catalysed reaction is cytidine(34) in tRNA(Ile2) + L-lysine + ATP = lysidine(34) in tRNA(Ile2) + AMP + diphosphate + H(+). Functionally, ligates lysine onto the cytidine present at position 34 of the AUA codon-specific tRNA(Ile) that contains the anticodon CAU, in an ATP-dependent manner. Cytidine is converted to lysidine, thus changing the amino acid specificity of the tRNA from methionine to isoleucine. The sequence is that of tRNA(Ile)-lysidine synthase from Rickettsia rickettsii (strain Iowa).